A 197-amino-acid polypeptide reads, in one-letter code: Protein GrpE (197 aa).

Positions methionine 1–arginine 40 are disordered.

Belongs to the GrpE family. As to quaternary structure, homodimer.

The protein localises to the cytoplasm. In terms of biological role, participates actively in the response to hyperosmotic and heat shock by preventing the aggregation of stress-denatured proteins, in association with DnaK and GrpE. It is the nucleotide exchange factor for DnaK and may function as a thermosensor. Unfolded proteins bind initially to DnaJ; upon interaction with the DnaJ-bound protein, DnaK hydrolyzes its bound ATP, resulting in the formation of a stable complex. GrpE releases ADP from DnaK; ATP binding to DnaK triggers the release of the substrate protein, thus completing the reaction cycle. Several rounds of ATP-dependent interactions between DnaJ, DnaK and GrpE are required for fully efficient folding. The chain is Protein GrpE from Escherichia coli (strain K12 / DH10B).